Reading from the N-terminus, the 210-residue chain is Protein MSO1 (210 aa).

M1 is subject to N-acetylmethionine. The residue at position 2 (M2) is an N-acetylserine. Residues 88-210 form a disordered region; that stretch reads KHDMKKQNSR…LKRRNNDYGF (123 aa). S102 bears the Phosphoserine mark. Residues 117-141 are compositionally biased toward polar residues; it reads TPSSNGNTPEYTPASKSFQDIYNNH. 2 stretches are compositionally biased toward low complexity: residues 142–161 and 172–183; these read TSSS…RPSA and SKTSNSFNTSST.

Interacts physically with SEC1.

Functionally, involved in secretion. Component of the secretory vesicle docking complex. This chain is Protein MSO1 (MSO1), found in Saccharomyces cerevisiae (strain ATCC 204508 / S288c) (Baker's yeast).